Here is a 328-residue protein sequence, read N- to C-terminus: Malate dehydrogenase (328 aa).

12–18 is a binding site for NAD(+); that stretch reads GAAGQIG. Residues Arg-95 and Arg-101 each coordinate substrate. Residues Asn-108, Gln-115, and 132–134 each bind NAD(+); that span reads VGN. Asn-134 and Arg-165 together coordinate substrate. The active-site Proton acceptor is His-190.

The protein belongs to the LDH/MDH superfamily. MDH type 2 family.

It carries out the reaction (S)-malate + NAD(+) = oxaloacetate + NADH + H(+). Catalyzes the reversible oxidation of malate to oxaloacetate. The protein is Malate dehydrogenase of Delftia acidovorans (strain DSM 14801 / SPH-1).